A 157-amino-acid polypeptide reads, in one-letter code: DNA gyrase inhibitor 2 (157 aa).

Belongs to the DNA gyrase inhibitor family. Interacts with DNA gyrase.

It is found in the cytoplasm. Functionally, inhibits the supercoiling activity of DNA gyrase. Acts by inhibiting DNA gyrase at an early step, prior to (or at the step of) binding of DNA by the gyrase. It protects cells against toxins that target DNA gyrase, by inhibiting activity of these toxins and reducing the formation of lethal double-strand breaks in the cell. The sequence is that of DNA gyrase inhibitor 2 from Dickeya dadantii (strain 3937) (Erwinia chrysanthemi (strain 3937)).